Reading from the N-terminus, the 211-residue chain is Large ribosomal subunit protein uL3 (211 aa).

The residue at position 150 (Q150) is an N5-methylglutamine.

It belongs to the universal ribosomal protein uL3 family. Part of the 50S ribosomal subunit. Forms a cluster with proteins L14 and L19. Methylated by PrmB.

One of the primary rRNA binding proteins, it binds directly near the 3'-end of the 23S rRNA, where it nucleates assembly of the 50S subunit. The chain is Large ribosomal subunit protein uL3 from Pseudomonas fluorescens (strain ATCC BAA-477 / NRRL B-23932 / Pf-5).